The following is a 267-amino-acid chain: Acetylglutamate kinase (267 aa).

Substrate is bound by residues 53-54 (GG), Arg-75, and Asn-167.

Belongs to the acetylglutamate kinase family. ArgB subfamily.

It localises to the cytoplasm. The catalysed reaction is N-acetyl-L-glutamate + ATP = N-acetyl-L-glutamyl 5-phosphate + ADP. Its pathway is amino-acid biosynthesis; L-arginine biosynthesis; N(2)-acetyl-L-ornithine from L-glutamate: step 2/4. Functionally, catalyzes the ATP-dependent phosphorylation of N-acetyl-L-glutamate. This is Acetylglutamate kinase from Shewanella pealeana (strain ATCC 700345 / ANG-SQ1).